The sequence spans 443 residues: 23S rRNA (uracil(1939)-C(5))-methyltransferase RlmD (443 aa).

The TRAM domain maps to 4 to 66 (QNRFDRTSFQ…RHFDEARVVE (63 aa)). The [4Fe-4S] cluster site is built by Cys-79, Cys-85, Cys-88, and Cys-167. Gln-275, Phe-304, Asn-309, Glu-325, Asp-352, and Asp-373 together coordinate S-adenosyl-L-methionine. Residue Cys-399 is the Nucleophile of the active site.

Belongs to the class I-like SAM-binding methyltransferase superfamily. RNA M5U methyltransferase family. RlmD subfamily.

It catalyses the reaction uridine(1939) in 23S rRNA + S-adenosyl-L-methionine = 5-methyluridine(1939) in 23S rRNA + S-adenosyl-L-homocysteine + H(+). In terms of biological role, catalyzes the formation of 5-methyl-uridine at position 1939 (m5U1939) in 23S rRNA. This chain is 23S rRNA (uracil(1939)-C(5))-methyltransferase RlmD, found in Xylella fastidiosa (strain Temecula1 / ATCC 700964).